A 579-amino-acid polypeptide reads, in one-letter code: Peptidoglycan D,D-transpeptidase FtsI (579 aa).

A helical transmembrane segment spans residues F15–D35. Residue S294 is the Acyl-ester intermediate of the active site. A disordered region spans residues D558–G579. Residues P561–N570 show a composition bias toward polar residues.

This sequence belongs to the transpeptidase family. FtsI subfamily.

It localises to the cell inner membrane. It catalyses the reaction Preferential cleavage: (Ac)2-L-Lys-D-Ala-|-D-Ala. Also transpeptidation of peptidyl-alanyl moieties that are N-acyl substituents of D-alanine.. The protein operates within cell wall biogenesis; peptidoglycan biosynthesis. Catalyzes cross-linking of the peptidoglycan cell wall at the division septum. Binds penicillin. The protein is Peptidoglycan D,D-transpeptidase FtsI of Pseudomonas aeruginosa (strain ATCC 15692 / DSM 22644 / CIP 104116 / JCM 14847 / LMG 12228 / 1C / PRS 101 / PAO1).